Reading from the N-terminus, the 160-residue chain is UPF0262 protein Mrad2831_3513 (160 aa).

It belongs to the UPF0262 family.

The chain is UPF0262 protein Mrad2831_3513 from Methylobacterium radiotolerans (strain ATCC 27329 / DSM 1819 / JCM 2831 / NBRC 15690 / NCIMB 10815 / 0-1).